A 217-amino-acid chain; its full sequence is GTPase IMAP family member GIMD1 (217 aa).

The AIG1-type G domain maps to 6–217 (KMIINLALFG…ENCYQVLTFK (212 aa)). GTP is bound by residues 15–23 (GMTQSGKSS), Ser36, and 148–150 (HAE).

This sequence belongs to the TRAFAC class TrmE-Era-EngA-EngB-Septin-like GTPase superfamily. AIG1/Toc34/Toc159-like paraseptin GTPase family. IAN subfamily.

This is GTPase IMAP family member GIMD1 (GIMD1) from Homo sapiens (Human).